A 588-amino-acid polypeptide reads, in one-letter code: Pleckstrin homology domain-containing family A member 4 (588 aa).

A PH domain is found at 54-153 (PVHIRGWLHK…WLRALGRASR (100 aa)). 2 disordered regions span residues 155–349 (EGED…QASM) and 495–588 (AGLG…VDHL). The residue at position 164 (Ser164) is a Phosphoserine. Residues 183–193 (VNRREEGRISE) show a composition bias toward basic and acidic residues. Residues 211–222 (TPNSTVDLQTDT) are compositionally biased toward polar residues. Composition is skewed to low complexity over residues 246–260 (PRPR…PLSA) and 321–334 (QRTQ…GSST). Residue Ser562 is modified to Phosphoserine.

The protein resides in the cytoplasm. Its subcellular location is the membrane. In terms of biological role, binds specifically to phosphatidylinositol 3-phosphate (PtdIns3P), but not to other phosphoinositides. This Mus musculus (Mouse) protein is Pleckstrin homology domain-containing family A member 4 (Plekha4).